The following is a 136-amino-acid chain: Protein NrdI (136 aa).

It belongs to the NrdI family.

Functionally, probably involved in ribonucleotide reductase function. This chain is Protein NrdI, found in Citrobacter koseri (strain ATCC BAA-895 / CDC 4225-83 / SGSC4696).